Here is a 258-residue protein sequence, read N- to C-terminus: Uroplakin-1a (258 aa).

At 1 to 14 (MASAAAAEAEKGSP) the chain is on the cytoplasmic side. A helical transmembrane segment spans residues 15–35 (VVVGLLVVGNIIILLSGLSLF). Residues 36-59 (AETIWVTADQYRVYPLMGVSGKDD) lie on the Extracellular side of the membrane. Residues 60-86 (VFAGAWIAIFCGFSFFMVASFGVGAAL) form a helical membrane-spanning segment. Over 87–91 (CRRRS) the chain is Cytoplasmic. The helical transmembrane segment at 92–112 (MVLTYLVLMLIVYIFECASCI) threads the bilayer. Residues 113 to 230 (TSYTHRDYMV…HIGHAIDSYT (118 aa)) are Extracellular-facing. An N-linked (GlcNAc...) asparagine glycan is attached at N170. A helical membrane pass occupies residues 231–252 (WGISWFGFAILMWTLPVMLIAM). The Cytoplasmic segment spans residues 253–258 (YFYTML).

It belongs to the tetraspanin (TM4SF) family. As to quaternary structure, homodimer; disulfide-linked. Interacts with uroplakin-2 (UPK2). As to expression, high expression restricted to ureteric urothelium (most superficial cells); low expression in prostate. Expression in normal urothelial cells is lost in culture. Some expression in tumor cell lines derived from urothelial malignancies.

Its subcellular location is the membrane. In terms of biological role, component of the asymmetric unit membrane (AUM); a highly specialized biomembrane elaborated by terminally differentiated urothelial cells. May play an important role in normal bladder epithelial physiology, possibly in regulating membrane permeability of superficial umbrella cells or in stabilizing the apical membrane through AUM/cytoskeletal interactions. This Homo sapiens (Human) protein is Uroplakin-1a (UPK1A).